The chain runs to 427 residues: Adenylosuccinate synthetase (427 aa).

Residues 12–18 (GDEGKGK) and 40–42 (GHT) contribute to the GTP site. Catalysis depends on aspartate 13, which acts as the Proton acceptor. The Mg(2+) site is built by aspartate 13 and glycine 40. IMP is bound by residues 13–16 (DEGK), 38–41 (NAGH), threonine 128, arginine 142, glutamine 223, threonine 238, and arginine 302. Histidine 41 serves as the catalytic Proton donor. 298 to 304 (TTTGRAR) is a binding site for substrate. Residues arginine 304, 330–332 (KLD), and 412–414 (AVG) each bind GTP.

Belongs to the adenylosuccinate synthetase family. Homodimer. Mg(2+) serves as cofactor.

The protein localises to the cytoplasm. The enzyme catalyses IMP + L-aspartate + GTP = N(6)-(1,2-dicarboxyethyl)-AMP + GDP + phosphate + 2 H(+). It functions in the pathway purine metabolism; AMP biosynthesis via de novo pathway; AMP from IMP: step 1/2. In terms of biological role, plays an important role in the de novo pathway of purine nucleotide biosynthesis. Catalyzes the first committed step in the biosynthesis of AMP from IMP. This Desulfitobacterium hafniense (strain DSM 10664 / DCB-2) protein is Adenylosuccinate synthetase.